Consider the following 586-residue polypeptide: Solute carrier family 13 member 2 (586 aa).

3 consecutive transmembrane segments (helical) span residues 13 to 33 (SYLI…IVQT), 53 to 73 (ALPL…MGIM), and 86 to 106 (TNIL…WNLH). The segment covering 165–175 (DVEEGNSNPSF) has biased composition (polar residues). Residues 165–209 (DVEEGNSNPSFELQEASPQKEETKLDNGQAVSVSSEPRAQKTKEH) are disordered. Helical transmembrane passes span 215–235 (GLSL…LTGT), 264–284 (FAFP…QVLF), 319–339 (PMSF…VLWF), 366–386 (GTVA…IPGL), 407–427 (TVND…FALA), 445–465 (PLQH…VAIF), 478–498 (FLPI…YVML), 506–526 (LAFM…FGGL), and 535–555 (GFLL…SWSI).

Belongs to the SLC13A/DASS transporter (TC 2.A.47) family. NADC subfamily. As to expression, highly expressed in kidney and small intestine. Not detectable in brain, heart, stomach and skeletal muscle.

The protein resides in the apical cell membrane. The enzyme catalyses succinate(out) + 3 Na(+)(out) = succinate(in) + 3 Na(+)(in). It catalyses the reaction fumarate(out) + 3 Na(+)(out) = fumarate(in) + 3 Na(+)(in). The catalysed reaction is 2-oxoglutarate(out) + 3 Na(+)(out) = 2-oxoglutarate(in) + 3 Na(+)(in). With respect to regulation, li(+) decreases succinate transport in the presence of Na(+), by competing at one of the three cation binding sites. In terms of biological role, low-affinity sodium-dicarboxylate cotransporter, that mediates the entry of citric acid cycle intermediates, such as succinate, citrate, fumarate and alpha-ketoglutarate (2-oxoglutarate) into the small intestine and renal proximal tubule. Can transport citrate in a Na(+)-dependent manner, recognizing the divalent form of citrate rather than the trivalent form which is normally found in blood. Transports the dicarboxylate into the cell with a probable stoichiometry of 3 Na(+) for 1 divalent dicarboxylate, rendering the process electrogenic. Has a critical role in renal dicarboxylate transport. The chain is Solute carrier family 13 member 2 (Slc13a2) from Mus musculus (Mouse).